A 426-amino-acid polypeptide reads, in one-letter code: 26S proteasome regulatory subunit 7 homolog A (426 aa).

Residue 209–216 (GPPGTGKT) participates in ATP binding. Residues K400 and K415 each participate in a glycyl lysine isopeptide (Lys-Gly) (interchain with G-Cter in ubiquitin) cross-link.

This sequence belongs to the AAA ATPase family. In terms of assembly, component of the 19S regulatory particle (RP/PA700) base subcomplex of the 26S proteasome. The 26S proteasome is composed of a core protease (CP), known as the 20S proteasome, capped at one or both ends by the 19S regulatory particle (RP/PA700). The RP/PA700 complex is composed of at least 17 different subunits in two subcomplexes, the base and the lid, which form the portions proximal and distal to the 20S proteolytic core, respectively.

The protein localises to the cytoplasm. The protein resides in the nucleus. Its function is as follows. The 26S proteasome is involved in the ATP-dependent degradation of ubiquitinated proteins. The regulatory (or ATPase) complex confers ATP dependency and substrate specificity to the 26S complex. This chain is 26S proteasome regulatory subunit 7 homolog A (RPT1A), found in Arabidopsis thaliana (Mouse-ear cress).